A 265-amino-acid chain; its full sequence is 14-3-3-like protein GF14-D (265 aa).

The disordered stretch occupies residues 244–265 (DANDDGGDEIKEAAAPKEPGDQ). The segment covering 251 to 265 (DEIKEAAAPKEPGDQ) has biased composition (basic and acidic residues).

Belongs to the 14-3-3 family. As to quaternary structure, interacts with BZR1. Interacts with ABI5.

Functionally, is associated with a DNA binding complex that binds to the G box, a well-characterized cis-acting DNA regulatory element found in plant genes. The sequence is that of 14-3-3-like protein GF14-D (GF14D) from Oryza sativa subsp. japonica (Rice).